A 230-amino-acid polypeptide reads, in one-letter code: 5'-methylthioadenosine/S-adenosylhomocysteine nucleosidase (230 aa).

Glu-12 acts as the Proton acceptor in catalysis. Substrate-binding positions include Gly-78, Met-153, and 174-175; that span reads ME. The active-site Proton donor is Asp-198.

It belongs to the PNP/UDP phosphorylase family. MtnN subfamily.

It carries out the reaction S-adenosyl-L-homocysteine + H2O = S-(5-deoxy-D-ribos-5-yl)-L-homocysteine + adenine. It catalyses the reaction S-methyl-5'-thioadenosine + H2O = 5-(methylsulfanyl)-D-ribose + adenine. The catalysed reaction is 5'-deoxyadenosine + H2O = 5-deoxy-D-ribose + adenine. It functions in the pathway amino-acid biosynthesis; L-methionine biosynthesis via salvage pathway; S-methyl-5-thio-alpha-D-ribose 1-phosphate from S-methyl-5'-thioadenosine (hydrolase route): step 1/2. In terms of biological role, catalyzes the irreversible cleavage of the glycosidic bond in both 5'-methylthioadenosine (MTA) and S-adenosylhomocysteine (SAH/AdoHcy) to adenine and the corresponding thioribose, 5'-methylthioribose and S-ribosylhomocysteine, respectively. Also cleaves 5'-deoxyadenosine, a toxic by-product of radical S-adenosylmethionine (SAM) enzymes, into 5-deoxyribose and adenine. The polypeptide is 5'-methylthioadenosine/S-adenosylhomocysteine nucleosidase (Tolumonas auensis (strain DSM 9187 / NBRC 110442 / TA 4)).